A 233-amino-acid polypeptide reads, in one-letter code: Leucyl/phenylalanyl-tRNA--protein transferase (233 aa).

Belongs to the L/F-transferase family.

It localises to the cytoplasm. It catalyses the reaction N-terminal L-lysyl-[protein] + L-leucyl-tRNA(Leu) = N-terminal L-leucyl-L-lysyl-[protein] + tRNA(Leu) + H(+). It carries out the reaction N-terminal L-arginyl-[protein] + L-leucyl-tRNA(Leu) = N-terminal L-leucyl-L-arginyl-[protein] + tRNA(Leu) + H(+). The enzyme catalyses L-phenylalanyl-tRNA(Phe) + an N-terminal L-alpha-aminoacyl-[protein] = an N-terminal L-phenylalanyl-L-alpha-aminoacyl-[protein] + tRNA(Phe). Its function is as follows. Functions in the N-end rule pathway of protein degradation where it conjugates Leu, Phe and, less efficiently, Met from aminoacyl-tRNAs to the N-termini of proteins containing an N-terminal arginine or lysine. The protein is Leucyl/phenylalanyl-tRNA--protein transferase of Anaeromyxobacter dehalogenans (strain 2CP-C).